Consider the following 190-residue polypeptide: dCTP deaminase (190 aa).

Residues 111 to 116 (KSTYAR), 135 to 137 (TLE), glutamine 156, tyrosine 172, and glutamine 182 contribute to the dCTP site. Residue glutamate 137 is the Proton donor/acceptor of the active site.

It belongs to the dCTP deaminase family. As to quaternary structure, homotrimer.

It catalyses the reaction dCTP + H2O + H(+) = dUTP + NH4(+). It participates in pyrimidine metabolism; dUMP biosynthesis; dUMP from dCTP (dUTP route): step 1/2. In terms of biological role, catalyzes the deamination of dCTP to dUTP. The polypeptide is dCTP deaminase (Stenotrophomonas maltophilia (strain K279a)).